The following is a 160-amino-acid chain: Sulfur-rich protein (160 aa).

Helical transmembrane passes span isoleucine 62–leucine 82 and phenylalanine 91–methionine 111.

The protein resides in the membrane. The sequence is that of Sulfur-rich protein (srp) from Chlamydia caviae (strain ATCC VR-813 / DSM 19441 / 03DC25 / GPIC) (Chlamydophila caviae).